Here is a 534-residue protein sequence, read N- to C-terminus: Beta-glucosidase 32 (534 aa).

The signal sequence occupies residues M1–G22. Q51 contributes to the a beta-D-glucoside binding site. An N-linked (GlcNAc...) asparagine glycan is attached at N68. Residues H154 and N199 to E200 contribute to the a beta-D-glucoside site. E200 (proton donor) is an active-site residue. A disulfide bridge connects residues C219 and C227. Residue Y344 participates in a beta-D-glucoside binding. N-linked (GlcNAc...) asparagine glycosylation occurs at N374. E417 serves as a coordination point for a beta-D-glucoside. Catalysis depends on E417, which acts as the Nucleophile. N425 is a glycosylation site (N-linked (GlcNAc...) asparagine). A beta-D-glucoside is bound by residues W467, E474 to W475, and F483.

This sequence belongs to the glycosyl hydrolase 1 family.

It carries out the reaction Hydrolysis of terminal, non-reducing beta-D-glucosyl residues with release of beta-D-glucose.. In Arabidopsis thaliana (Mouse-ear cress), this protein is Beta-glucosidase 32.